A 534-amino-acid chain; its full sequence is Solute carrier family 22 member 15 (534 aa).

Residues 22 to 42 (FLLAVLLQLYSATEAIIITIL) form a helical membrane-spanning segment. 3 N-linked (GlcNAc...) asparagine glycosylation sites follow: Asn-52, Asn-58, and Asn-83. The next 11 helical transmembrane spans lie at 97–117 (AAYE…IGVI), 136–156 (LALE…PLFL), 161–181 (LVGV…NECI), 191–211 (SLGS…GYFI), 216–236 (LLAL…LCIP), 297–317 (TLIM…LTLS), 327–347 (LNLA…MYLI), 356–376 (GSLA…MLVP), 391–411 (TLSL…YIYS), 424–444 (MGVC…IPAL), and 450–470 (ALPF…SLLL). An N-linked (GlcNAc...) asparagine glycan is attached at Asn-513.

This sequence belongs to the major facilitator (TC 2.A.1) superfamily. Organic cation transporter (TC 2.A.1.19) family.

The protein resides in the membrane. In terms of biological role, probably transports organic cations. In Xenopus tropicalis (Western clawed frog), this protein is Solute carrier family 22 member 15 (slc22a15).